The primary structure comprises 313 residues: Antiviral protein I (313 aa).

An N-terminal signal peptide occupies residues 1–22 (MKSMLVVTISIWLILAPTSTWA). 2 disulfide bridges follow: Cys56-Cys281 and Cys107-Cys128. Tyr94 is an active-site residue. Val95 is a binding site for substrate. Ser143 serves as a coordination point for substrate. Tyr145 is an active-site residue. Position 197 (Ser197) interacts with substrate. Catalysis depends on residues Glu198 and Arg201. Residue Arg201 coordinates substrate. The propeptide occupies 286 to 313 (NQNAMFPQLIMSTYYNYMVNLGDLFEGF).

This sequence belongs to the ribosome-inactivating protein family. Type 1 RIP subfamily. As to quaternary structure, monomer. In terms of tissue distribution, expressed in spring leaves (at protein level). Expressed in roots (at protein level).

The catalysed reaction is Endohydrolysis of the N-glycosidic bond at one specific adenosine on the 28S rRNA.. Its function is as follows. Possesses antiviral potency. Inhibits viral infection of plants (tobacco mosaic virus). Inhibits protein synthesis. Releases both adenine and guanine from Escherichia coli rRNA in vitro. Activity on guanine is 20 times slower than that on adenine. The polypeptide is Antiviral protein I (PAP1) (Phytolacca americana (American pokeweed)).